A 228-amino-acid chain; its full sequence is Ribonuclease 3 (228 aa).

The region spanning 5 to 127 is the RNase III domain; sequence KDALQDRLGY…LFGAIYLDGG (123 aa). Glu-40 is a Mg(2+) binding site. Residue Asp-44 is part of the active site. Asp-113 and Glu-116 together coordinate Mg(2+). Glu-116 is a catalytic residue. Residues 154–224 enclose the DRBM domain; sequence DPKTRLQEHL…AEQMLKRLED (71 aa). The tract at residues 200–228 is disordered; that stretch reads AEGEAGSRRKAEQQAAEQMLKRLEDKHER. Basic and acidic residues predominate over residues 218-228; the sequence is MLKRLEDKHER.

Belongs to the ribonuclease III family. In terms of assembly, homodimer. The cofactor is Mg(2+).

The protein localises to the cytoplasm. The catalysed reaction is Endonucleolytic cleavage to 5'-phosphomonoester.. Functionally, digests double-stranded RNA. Involved in the processing of primary rRNA transcript to yield the immediate precursors to the large and small rRNAs (23S and 16S). Processes some mRNAs, and tRNAs when they are encoded in the rRNA operon. Processes pre-crRNA and tracrRNA of type II CRISPR loci if present in the organism. This Alkalilimnicola ehrlichii (strain ATCC BAA-1101 / DSM 17681 / MLHE-1) protein is Ribonuclease 3.